The primary structure comprises 932 residues: Calpain-like protease palB/cpr-8 (932 aa).

The 324-residue stretch at 96 to 419 (KLHGNIFPPW…FDSLYVNWSP (324 aa)) folds into the Calpain catalytic domain. Catalysis depends on residues Cys-178, His-346, and Asn-366. A disordered region spans residues 890-932 (QGHVTEGSDDDGGGGGGGGGGVHVEISSDGVVSIGEWEVADED). The span at 902-911 (GGGGGGGGGV) shows a compositional bias: gly residues.

Belongs to the peptidase C2 family. PalB/RIM13 subfamily.

In terms of biological role, required for the proteolytic cleavage of the transcription factor pacc-1 in response to alkaline ambient pH. The chain is Calpain-like protease palB/cpr-8 (cpr-8) from Neurospora crassa (strain ATCC 24698 / 74-OR23-1A / CBS 708.71 / DSM 1257 / FGSC 987).